The following is a 324-amino-acid chain: 4-hydroxybenzoyl-CoA reductase subunit beta (324 aa).

An FAD-binding PCMH-type domain is found at 2 to 217 (NILTDFRTHR…AAIEVPPTGA (216 aa)). FAD-binding positions include 29–36 (PLGAGTDL), Thr111, Asn115, and Gln118. [4Fe-4S] cluster is bound by residues Cys122, Cys138, Cys146, and Cys155. FAD-binding residues include Asp162 and Lys224.

As to quaternary structure, heterohexamer of two alpha, two beta and two gamma subunits. FAD is required as a cofactor. The cofactor is [4Fe-4S] cluster.

The enzyme catalyses oxidized 2[4Fe-4S]-[ferredoxin] + benzoyl-CoA + H2O = 4-hydroxybenzoyl-CoA + reduced 2[4Fe-4S]-[ferredoxin] + 2 H(+). Its activity is regulated as follows. Inactivated by low concentrations of cyanide in vitro. In terms of biological role, component of a complex that catalyzes the reductive dehydroxylation of 4-hydroxybenzoyl-CoA to benzoyl-CoA. Reaction is not reversible. Is a key enzyme in the anaerobic degradation of phenolic compounds. The chain is 4-hydroxybenzoyl-CoA reductase subunit beta (hcrB) from Thauera aromatica.